The following is a 138-amino-acid chain: Large ribosomal subunit protein uL16 (138 aa).

Basic residues predominate over residues 1 to 19 (MLIPRRVKHRKQHHPKRSG). The disordered stretch occupies residues 1–24 (MLIPRRVKHRKQHHPKRSGAAKGG).

This sequence belongs to the universal ribosomal protein uL16 family. As to quaternary structure, part of the 50S ribosomal subunit.

Binds 23S rRNA and is also seen to make contacts with the A and possibly P site tRNAs. The protein is Large ribosomal subunit protein uL16 of Micrococcus luteus (strain ATCC 4698 / DSM 20030 / JCM 1464 / CCM 169 / CCUG 5858 / IAM 1056 / NBRC 3333 / NCIMB 9278 / NCTC 2665 / VKM Ac-2230) (Micrococcus lysodeikticus).